We begin with the raw amino-acid sequence, 616 residues long: tRNA uridine 5-carboxymethylaminomethyl modification enzyme MnmG (616 aa).

FAD-binding positions include Gly-10–Gly-15, Val-122, and Ser-177. Position 271 to 285 (Gly-271 to Phe-285) interacts with NAD(+). An FAD-binding site is contributed by Gln-368.

The protein belongs to the MnmG family. As to quaternary structure, homodimer. Heterotetramer of two MnmE and two MnmG subunits. Requires FAD as cofactor.

Its subcellular location is the cytoplasm. NAD-binding protein involved in the addition of a carboxymethylaminomethyl (cmnm) group at the wobble position (U34) of certain tRNAs, forming tRNA-cmnm(5)s(2)U34. The protein is tRNA uridine 5-carboxymethylaminomethyl modification enzyme MnmG of Malacoplasma penetrans (strain HF-2) (Mycoplasma penetrans).